We begin with the raw amino-acid sequence, 242 residues long: Uridylate kinase (242 aa).

16–19 (KISG) serves as a coordination point for ATP. The interval 24–29 (GDQGFG) is involved in allosteric activation by GTP. G58 serves as a coordination point for UMP. ATP is bound by residues G59 and R63. UMP is bound by residues D78 and 139–146 (TGNPYFTT). 3 residues coordinate ATP: T166, Y172, and D175.

This sequence belongs to the UMP kinase family. As to quaternary structure, homohexamer.

It is found in the cytoplasm. The catalysed reaction is UMP + ATP = UDP + ADP. It participates in pyrimidine metabolism; CTP biosynthesis via de novo pathway; UDP from UMP (UMPK route): step 1/1. Its activity is regulated as follows. Allosterically activated by GTP. Inhibited by UTP. Catalyzes the reversible phosphorylation of UMP to UDP. The protein is Uridylate kinase of Roseobacter denitrificans (strain ATCC 33942 / OCh 114) (Erythrobacter sp. (strain OCh 114)).